A 499-amino-acid polypeptide reads, in one-letter code: MSSTQTRTDVILIGAGIMSATLGSLFKELVPEWNIKVFEKLDAAGEESSNEWNNAGTGHAALCELNYTTENADGTIDISKAVNVNEQFQISRQFWAHLVKQGLIENPGAFIRSIPHMSMVQGEKNVDFLKRRLEALTTNPLFEGMVLSDDPSQLQEWIPLIMDGRTSDEPIAATKIDSGTDVNFGALTRMLFDHLTSNGVELNYGHSVEDVKRLENGHWEVKVKDMSQNTIETHTAPFLFIGGGGGSLPLLQKTGIPESKQIGGFPVSGLFLVCKNREVIEQHHAKVYGKAKVGAPPMSVPHLDTRFIDGRKELLFGPFAGFTPKFLKTGSNLDLIRSVKPNNVITMLAAGAKEMPLTKYLIEQVLLSHDKRMDELREFIPNAKNEDWEIVVAGQRVQVIKDTPQGKGTLQFGTEVVSSEDGSVAALLGASPGASTAVHVMLKVLEQCFPQHLPEWEPKIKEMVPSYGLKLSEHPDLFKTIHESTAITLGLEEKDMVHN.

The protein belongs to the MQO family. It depends on FAD as a cofactor.

The catalysed reaction is (S)-malate + a quinone = a quinol + oxaloacetate. It functions in the pathway carbohydrate metabolism; tricarboxylic acid cycle; oxaloacetate from (S)-malate (quinone route): step 1/1. This is Probable malate:quinone oxidoreductase from Exiguobacterium sp. (strain ATCC BAA-1283 / AT1b).